A 285-amino-acid polypeptide reads, in one-letter code: 4-hydroxybenzoate octaprenyltransferase (285 aa).

7 consecutive transmembrane segments (helical) span residues 17-37, 41-61, 92-112, 135-155, 158-178, 216-236, and 263-283; these read PVGI…AGAG, PKVL…GCVI, LLLF…LNPL, HWPQ…AFAA, GTVP…ATVY, ALLL…YYYL, and AFLN…LHYL.

This sequence belongs to the UbiA prenyltransferase family. The cofactor is Mg(2+).

Its subcellular location is the cell inner membrane. It catalyses the reaction all-trans-octaprenyl diphosphate + 4-hydroxybenzoate = 4-hydroxy-3-(all-trans-octaprenyl)benzoate + diphosphate. Its pathway is cofactor biosynthesis; ubiquinone biosynthesis. Catalyzes the prenylation of para-hydroxybenzoate (PHB) with an all-trans polyprenyl group. Mediates the second step in the final reaction sequence of ubiquinone-8 (UQ-8) biosynthesis, which is the condensation of the polyisoprenoid side chain with PHB, generating the first membrane-bound Q intermediate 3-octaprenyl-4-hydroxybenzoate. The protein is 4-hydroxybenzoate octaprenyltransferase of Nitrosococcus oceani (strain ATCC 19707 / BCRC 17464 / JCM 30415 / NCIMB 11848 / C-107).